We begin with the raw amino-acid sequence, 366 residues long: Cobalt-precorrin-5B C(1)-methyltransferase (366 aa).

This sequence belongs to the CbiD family.

It catalyses the reaction Co-precorrin-5B + S-adenosyl-L-methionine = Co-precorrin-6A + S-adenosyl-L-homocysteine. The protein operates within cofactor biosynthesis; adenosylcobalamin biosynthesis; cob(II)yrinate a,c-diamide from sirohydrochlorin (anaerobic route): step 6/10. Functionally, catalyzes the methylation of C-1 in cobalt-precorrin-5B to form cobalt-precorrin-6A. This is Cobalt-precorrin-5B C(1)-methyltransferase from Thermoanaerobacter sp. (strain X514).